A 156-amino-acid polypeptide reads, in one-letter code: MPRRREVPKRKIIPDPKYKDKLVAKFTNSLMQSGKKATAEGILYGAFDIVRDRFKEEPIDVFRKALDNVKPKLEVKSRRVGGATYQVPVEVRPERRVALAMRWLVTYSRGRGEKTMRERLAAELVDAAQNRGNAVKKRDDTHKMAEANKAFAHYRW.

The protein belongs to the universal ribosomal protein uS7 family. Part of the 30S ribosomal subunit. Contacts proteins S9 and S11.

Its function is as follows. One of the primary rRNA binding proteins, it binds directly to 16S rRNA where it nucleates assembly of the head domain of the 30S subunit. Is located at the subunit interface close to the decoding center, probably blocks exit of the E-site tRNA. This Sorangium cellulosum (strain So ce56) (Polyangium cellulosum (strain So ce56)) protein is Small ribosomal subunit protein uS7.